The following is a 178-amino-acid chain: Large ribosomal subunit protein uL6 (178 aa).

The protein belongs to the universal ribosomal protein uL6 family. As to quaternary structure, part of the 50S ribosomal subunit.

In terms of biological role, this protein binds to the 23S rRNA, and is important in its secondary structure. It is located near the subunit interface in the base of the L7/L12 stalk, and near the tRNA binding site of the peptidyltransferase center. This is Large ribosomal subunit protein uL6 from Streptococcus uberis (strain ATCC BAA-854 / 0140J).